The chain runs to 476 residues: Inosine-5'-monophosphate dehydrogenase (476 aa).

2 CBS domains span residues 92-150 (MIEN…IADV) and 151-207 (MTKD…PNAS). NAD(+) is bound by residues Asp244 and 294-296 (GVG). K(+) contacts are provided by Gly296 and Gly298. Position 299 (Ser299) interacts with IMP. K(+) is bound at residue Cys301. Catalysis depends on Cys301, which acts as the Thioimidate intermediate. IMP is bound by residues 334-336 (DGG), 357-358 (GS), 381-385 (YRGMA), and Glu413. 2 residues coordinate K(+): Glu467 and Ser468.

Belongs to the IMPDH/GMPR family. In terms of assembly, homotetramer. It depends on K(+) as a cofactor.

The catalysed reaction is IMP + NAD(+) + H2O = XMP + NADH + H(+). The protein operates within purine metabolism; XMP biosynthesis via de novo pathway; XMP from IMP: step 1/1. Mycophenolic acid (MPA) is a non-competitive inhibitor that prevents formation of the closed enzyme conformation by binding to the same site as the amobile flap. In contrast, mizoribine monophosphate (MZP) is a competitive inhibitor that induces the closed conformation. MPA is a potent inhibitor of mammalian IMPDHs but a poor inhibitor of the bacterial enzymes. MZP is a more potent inhibitor of bacterial IMPDH. Catalyzes the conversion of inosine 5'-phosphate (IMP) to xanthosine 5'-phosphate (XMP), the first committed and rate-limiting step in the de novo synthesis of guanine nucleotides, and therefore plays an important role in the regulation of cell growth. This chain is Inosine-5'-monophosphate dehydrogenase, found in Nitrosopumilus maritimus (strain SCM1).